A 406-amino-acid polypeptide reads, in one-letter code: Succinylornithine transaminase (406 aa).

Lys252 carries the post-translational modification N6-(pyridoxal phosphate)lysine.

Belongs to the class-III pyridoxal-phosphate-dependent aminotransferase family. AstC subfamily. Pyridoxal 5'-phosphate serves as cofactor.

It catalyses the reaction N(2)-succinyl-L-ornithine + 2-oxoglutarate = N-succinyl-L-glutamate 5-semialdehyde + L-glutamate. It functions in the pathway amino-acid degradation; L-arginine degradation via AST pathway; L-glutamate and succinate from L-arginine: step 3/5. Catalyzes the transamination of N(2)-succinylornithine and alpha-ketoglutarate into N(2)-succinylglutamate semialdehyde and glutamate. Can also act as an acetylornithine aminotransferase. The sequence is that of Succinylornithine transaminase from Escherichia coli O45:K1 (strain S88 / ExPEC).